Consider the following 71-residue polypeptide: Large ribosomal subunit protein bL32c (71 aa).

A disordered region spans residues 1–24 (MAVPKKRTSRSKKKIRKNVRKGKK).

The protein belongs to the bacterial ribosomal protein bL32 family.

It localises to the plastid. Its subcellular location is the chloroplast. The chain is Large ribosomal subunit protein bL32c from Pinus koraiensis (Korean pine).